Here is a 388-residue protein sequence, read N- to C-terminus: Putative 8-amino-7-oxononanoate synthase (388 aa).

Residue arginine 23 coordinates substrate. A pyridoxal 5'-phosphate-binding site is contributed by 110–111 (GY). Histidine 135 serves as a coordination point for substrate. Pyridoxal 5'-phosphate contacts are provided by residues serine 182, 207–210 (DDAH), and 238–241 (TLSK). N6-(pyridoxal phosphate)lysine is present on lysine 241. A substrate-binding site is contributed by threonine 355.

It belongs to the class-II pyridoxal-phosphate-dependent aminotransferase family. BioF subfamily. In terms of assembly, homodimer. It depends on pyridoxal 5'-phosphate as a cofactor.

The enzyme catalyses 6-carboxyhexanoyl-[ACP] + L-alanine + H(+) = (8S)-8-amino-7-oxononanoate + holo-[ACP] + CO2. It participates in cofactor biosynthesis; biotin biosynthesis. Its function is as follows. Catalyzes the decarboxylative condensation of pimeloyl-[acyl-carrier protein] and L-alanine to produce 8-amino-7-oxononanoate (AON), [acyl-carrier protein], and carbon dioxide. The sequence is that of Putative 8-amino-7-oxononanoate synthase (bioF) from Thermodesulfovibrio yellowstonii (strain ATCC 51303 / DSM 11347 / YP87).